Reading from the N-terminus, the 100-residue chain is Small ribosomal subunit protein uS14 (100 aa).

It belongs to the universal ribosomal protein uS14 family. Part of the 30S ribosomal subunit. Contacts proteins S3 and S10.

In terms of biological role, binds 16S rRNA, required for the assembly of 30S particles and may also be responsible for determining the conformation of the 16S rRNA at the A site. The protein is Small ribosomal subunit protein uS14 of Rippkaea orientalis (strain PCC 8801 / RF-1) (Cyanothece sp. (strain PCC 8801)).